The primary structure comprises 456 residues: PTS system sucrose-specific EIIBC component (456 aa).

One can recognise a PTS EIIB type-1 domain in the interval 4-87 (EQISCSLLPL…TQAAGISESS (84 aa)). C26 serves as the catalytic Phosphocysteine intermediate; for EIIB activity. The region spanning 107–456 (RLLSNIFVPI…LVLKYKTDAE (350 aa)) is the PTS EIIC type-1 domain. A run of 10 helical transmembrane segments spans residues 112 to 132 (IFVP…LLGM), 144 to 164 (AIYI…PILI), 181 to 201 (TLGG…AAGF), 213 to 233 (MIGY…MSIV), 247 to 267 (LILT…LIIG), 288 to 308 (AGWL…ITGI), 329 to 349 (FLLP…LAVW), 360 to 380 (ITLP…IFGI), 388 to 408 (FIAA…VHVY), and 428 to 448 (LLNY…VSLV).

It is found in the cell inner membrane. It catalyses the reaction N(pros)-phospho-L-histidyl-[protein](out) + sucrose = sucrose 6(G)-phosphate(in) + L-histidyl-[protein]. Its function is as follows. The phosphoenolpyruvate-dependent sugar phosphotransferase system (sugar PTS), a major carbohydrate active transport system, catalyzes the phosphorylation of incoming sugar substrates concomitantly with their translocation across the cell membrane. This system is involved in sucrose transport. The polypeptide is PTS system sucrose-specific EIIBC component (Salmonella typhimurium).